Reading from the N-terminus, the 312-residue chain is Ribosomal protein L11 methyltransferase (312 aa).

S-adenosyl-L-methionine contacts are provided by Thr162, Gly183, Asp205, and Asn248.

This sequence belongs to the methyltransferase superfamily. PrmA family.

Its subcellular location is the cytoplasm. It carries out the reaction L-lysyl-[protein] + 3 S-adenosyl-L-methionine = N(6),N(6),N(6)-trimethyl-L-lysyl-[protein] + 3 S-adenosyl-L-homocysteine + 3 H(+). Functionally, methylates ribosomal protein L11. This Bacillus cereus (strain ATCC 10987 / NRS 248) protein is Ribosomal protein L11 methyltransferase.